A 165-amino-acid polypeptide reads, in one-letter code: Small ribosomal subunit protein uS5 (165 aa).

One can recognise an S5 DRBM domain in the interval 10–73; it reads LKEKVVSISR…EDAKKNLVEV (64 aa).

The protein belongs to the universal ribosomal protein uS5 family. As to quaternary structure, part of the 30S ribosomal subunit. Contacts proteins S4 and S8.

In terms of biological role, with S4 and S12 plays an important role in translational accuracy. Located at the back of the 30S subunit body where it stabilizes the conformation of the head with respect to the body. In Clostridium perfringens (strain ATCC 13124 / DSM 756 / JCM 1290 / NCIMB 6125 / NCTC 8237 / Type A), this protein is Small ribosomal subunit protein uS5.